The sequence spans 98 residues: NADH-ubiquinone oxidoreductase chain 4L (98 aa).

Transmembrane regions (helical) follow at residues 1 to 21 (MSLI…GLLM), 29 to 49 (SLLC…MMVL), and 61 to 81 (IILL…LVMI).

It belongs to the complex I subunit 4L family. Core subunit of respiratory chain NADH dehydrogenase (Complex I) which is composed of 45 different subunits.

It is found in the mitochondrion inner membrane. It catalyses the reaction a ubiquinone + NADH + 5 H(+)(in) = a ubiquinol + NAD(+) + 4 H(+)(out). Functionally, core subunit of the mitochondrial membrane respiratory chain NADH dehydrogenase (Complex I) which catalyzes electron transfer from NADH through the respiratory chain, using ubiquinone as an electron acceptor. Part of the enzyme membrane arm which is embedded in the lipid bilayer and involved in proton translocation. The polypeptide is NADH-ubiquinone oxidoreductase chain 4L (MT-ND4L) (Ceratotherium simum (White rhinoceros)).